Consider the following 356-residue polypeptide: GATA zinc finger domain-containing protein 17 (356 aa).

Positions 91-119 form a coiled coil; the sequence is LKEFDALEASLNAELECLELQYSSDTSEL. Residues 158-188 show a composition bias toward low complexity; it reads TASTSTSTPTNTTTTTTTTSNSLTKNNNSAL. The interval 158–294 is disordered; it reads TASTSTSTPT…DITEESKVKE (137 aa). A compositionally biased stretch (acidic residues) spans 206–228; that stretch reads SSDDEEDDQKDDQDKDDSDEDNV. A compositionally biased stretch (low complexity) spans 260–284; that stretch reads TAITTTTTPITTTDSNIIGTTTTTD. The segment at 304 to 331 adopts a GATA-type zinc-finger fold; sequence CYVCKVTETPYWRRGTDNGVVVDLCNEC.

This is GATA zinc finger domain-containing protein 17 (gtaQ) from Dictyostelium discoideum (Social amoeba).